A 100-amino-acid chain; its full sequence is Vesicle-associated membrane protein 8 (100 aa).

Topologically, residues Met1–Lys74 are cytoplasmic. Phosphoserine is present on residues Ser4 and Ser17. The v-SNARE coiled-coil homology domain maps to Arg11–Lys71. Residues Thr27, Thr47, and Thr53 each carry the phosphothreonine modification. Position 54 is a phosphoserine (Ser54). A helical; Anchor for type IV membrane protein transmembrane segment spans residues Met75 to Thr95. Residues Gly96 to Thr100 are Vesicular-facing.

Belongs to the synaptobrevin family. As to quaternary structure, forms a SNARE complex composed of VAMP8, SNAP29 and STX17 involved in fusion of autophagosome with lysosome. Found in a number of SNARE complexes with NAPA, SNAP23, SNAP25, STX1A, STX4, STX7, STX8 and VTI1B. Interacts with PICALM. SNARE complex formation and binding by PICALM are mutually exclusive processes for VAMP8. Interacts with SBF2/MTMR13. Interacts with RAB21 (in GTP-bound form) in response to starvation; the interaction probably regulates VAMP8 endolysosomal trafficking. Interacts with STX17; this interaction is increased in the absence of TMEM39A. Interacts with TRIM6. Expressed (at protein level) at a high level in kidney, lung and spleen; at a lower level in testis, liver, brain and heart. Expressed in kidney and retinal pigment epithelium derived cell line.

The protein resides in the lysosome membrane. The protein localises to the late endosome membrane. It localises to the early endosome membrane. Its subcellular location is the midbody. It is found in the cell membrane. The protein resides in the zymogen granule membrane. Its function is as follows. SNAREs, soluble N-ethylmaleimide-sensitive factor-attachment protein receptors, are essential proteins for fusion of cellular membranes. SNAREs localized on opposing membranes assemble to form a trans-SNARE complex, an extended, parallel four alpha-helical bundle that drives membrane fusion. VAMP8 is a SNARE involved in autophagy through the direct control of autophagosome membrane fusion with the lysososome membrane via its interaction with the STX17-SNAP29 binary t-SNARE complex. Also required for dense-granule secretion in platelets. Also plays a role in regulated enzyme secretion in pancreatic acinar cells. Involved in the abscission of the midbody during cell division, which leads to completely separate daughter cells. Involved in the homotypic fusion of early and late endosomes. Also participates in the activation of type I interferon antiviral response through a TRIM6-dependent mechanism. The chain is Vesicle-associated membrane protein 8 from Rattus norvegicus (Rat).